A 580-amino-acid polypeptide reads, in one-letter code: Dihydroxy-acid dehydratase (580 aa).

D95 lines the Mg(2+) pocket. Position 136 (C136) interacts with [2Fe-2S] cluster. The Mg(2+) site is built by D137 and K138. At K138 the chain carries N6-carboxylysine. Residue C209 coordinates [2Fe-2S] cluster. Position 462 (E462) interacts with Mg(2+). The Proton acceptor role is filled by S488.

The protein belongs to the IlvD/Edd family. Homodimer. Requires [2Fe-2S] cluster as cofactor. It depends on Mg(2+) as a cofactor.

It carries out the reaction (2R)-2,3-dihydroxy-3-methylbutanoate = 3-methyl-2-oxobutanoate + H2O. It catalyses the reaction (2R,3R)-2,3-dihydroxy-3-methylpentanoate = (S)-3-methyl-2-oxopentanoate + H2O. It functions in the pathway amino-acid biosynthesis; L-isoleucine biosynthesis; L-isoleucine from 2-oxobutanoate: step 3/4. Its pathway is amino-acid biosynthesis; L-valine biosynthesis; L-valine from pyruvate: step 3/4. In terms of biological role, functions in the biosynthesis of branched-chain amino acids. Catalyzes the dehydration of (2R,3R)-2,3-dihydroxy-3-methylpentanoate (2,3-dihydroxy-3-methylvalerate) into 2-oxo-3-methylpentanoate (2-oxo-3-methylvalerate) and of (2R)-2,3-dihydroxy-3-methylbutanoate (2,3-dihydroxyisovalerate) into 2-oxo-3-methylbutanoate (2-oxoisovalerate), the penultimate precursor to L-isoleucine and L-valine, respectively. This is Dihydroxy-acid dehydratase from Leuconostoc mesenteroides subsp. mesenteroides (strain ATCC 8293 / DSM 20343 / BCRC 11652 / CCM 1803 / JCM 6124 / NCDO 523 / NBRC 100496 / NCIMB 8023 / NCTC 12954 / NRRL B-1118 / 37Y).